Here is a 281-residue protein sequence, read N- to C-terminus: Acetylglutamate kinase (281 aa).

Substrate-binding positions include 64–65 (GG), R86, and N179.

This sequence belongs to the acetylglutamate kinase family. ArgB subfamily.

The protein localises to the cytoplasm. It carries out the reaction N-acetyl-L-glutamate + ATP = N-acetyl-L-glutamyl 5-phosphate + ADP. It functions in the pathway amino-acid biosynthesis; L-arginine biosynthesis; N(2)-acetyl-L-ornithine from L-glutamate: step 2/4. Its function is as follows. Catalyzes the ATP-dependent phosphorylation of N-acetyl-L-glutamate. This Campylobacter curvus (strain 525.92) protein is Acetylglutamate kinase.